The primary structure comprises 373 residues: Chaperone protein DnaJ (373 aa).

Positions 5-69 (DYYEVLGVNK…NKRVNYDQFG (65 aa)) constitute a J domain. A CR-type zinc finger spans residues 130 to 212 (GTKKEISIKK…CKGKGTENKT (83 aa)). Cys143, Cys146, Cys160, Cys163, Cys186, Cys189, Cys200, and Cys203 together coordinate Zn(2+). CXXCXGXG motif repeat units lie at residues 143 to 150 (CHTCNGDG), 160 to 167 (CSYCNGAG), 186 to 193 (CPKCEGSG), and 200 to 207 (CPTCKGKG).

The protein belongs to the DnaJ family. Homodimer. It depends on Zn(2+) as a cofactor.

It is found in the cytoplasm. Its function is as follows. Participates actively in the response to hyperosmotic and heat shock by preventing the aggregation of stress-denatured proteins and by disaggregating proteins, also in an autonomous, DnaK-independent fashion. Unfolded proteins bind initially to DnaJ; upon interaction with the DnaJ-bound protein, DnaK hydrolyzes its bound ATP, resulting in the formation of a stable complex. GrpE releases ADP from DnaK; ATP binding to DnaK triggers the release of the substrate protein, thus completing the reaction cycle. Several rounds of ATP-dependent interactions between DnaJ, DnaK and GrpE are required for fully efficient folding. Also involved, together with DnaK and GrpE, in the DNA replication of plasmids through activation of initiation proteins. The sequence is that of Chaperone protein DnaJ from Staphylococcus epidermidis (strain ATCC 35984 / DSM 28319 / BCRC 17069 / CCUG 31568 / BM 3577 / RP62A).